A 175-amino-acid chain; its full sequence is Ribosome maturation factor RimM (175 aa).

The 81-residue stretch at 95-175 (SEDEFYWREL…RIEVDWDPGF (81 aa)) folds into the PRC barrel domain.

It belongs to the RimM family. As to quaternary structure, binds ribosomal protein uS19.

It localises to the cytoplasm. An accessory protein needed during the final step in the assembly of 30S ribosomal subunit, possibly for assembly of the head region. Essential for efficient processing of 16S rRNA. May be needed both before and after RbfA during the maturation of 16S rRNA. It has affinity for free ribosomal 30S subunits but not for 70S ribosomes. The sequence is that of Ribosome maturation factor RimM from Aliivibrio salmonicida (strain LFI1238) (Vibrio salmonicida (strain LFI1238)).